A 469-amino-acid polypeptide reads, in one-letter code: Pancreatic lipase-related protein 2 (469 aa).

The N-terminal stretch at 1 to 17 (MLPPWTLGLLLLATVRG) is a signal peptide. A disulfide bridge links Cys21 with Cys27. Residues 93-105 (IHGFLDKAEDSWP) form a required for galactolipase activity region. Cys109 and Cys120 form a disulfide bridge. Ser171 acts as the Nucleophile in catalysis. Asp195 functions as the Charge relay system in the catalytic mechanism. Ca(2+)-binding residues include Glu206, Arg209, Asp211, and Asp214. A disulfide bridge connects residues Cys256 and Cys280. The required for galactolipase activity stretch occupies residues 257 to 279 (KKNVLSTITDIDGIWEGIGGFVS). His282 serves as the catalytic Charge relay system. Intrachain disulfides connect Cys304/Cys315 and Cys318/Cys323. Asn353 and Asn428 each carry an N-linked (GlcNAc...) asparagine glycan. The region spanning 357-469 (WRYKISVTLS…ENVLQSLYPC (113 aa)) is the PLAT domain. Cys453 and Cys469 are oxidised to a cystine.

The protein belongs to the AB hydrolase superfamily. Lipase family. As to expression, pancreas.

Its subcellular location is the secreted. It is found in the zymogen granule membrane. The protein localises to the cell projection. It localises to the neuron projection. The catalysed reaction is a triacylglycerol + H2O = a diacylglycerol + a fatty acid + H(+). It catalyses the reaction a 1,2-diacyl-3-O-(beta-D-galactosyl)-sn-glycerol + 2 H2O = 3-beta-D-galactosyl-sn-glycerol + 2 a fatty acid + 2 H(+). It carries out the reaction 1,2,3-tri-(9Z-octadecenoyl)-glycerol + H2O = di-(9Z)-octadecenoylglycerol + (9Z)-octadecenoate + H(+). The enzyme catalyses di-(9Z)-octadecenoylglycerol + H2O = (9Z-octadecenoyl)-glycerol + (9Z)-octadecenoate + H(+). The catalysed reaction is (9Z-octadecenoyl)-glycerol + H2O = glycerol + (9Z)-octadecenoate + H(+). It catalyses the reaction 1-(9Z-octadecenoyl)-glycerol + H2O = glycerol + (9Z)-octadecenoate + H(+). It carries out the reaction 1,2,3-tripropanoylglycerol + H2O = dipropanoylglycerol + propanoate + H(+). The enzyme catalyses 1,2,3-tributanoylglycerol + H2O = dibutanoylglycerol + butanoate + H(+). The catalysed reaction is 1,2,3-trioctanoylglycerol + H2O = dioctanoylglycerol + octanoate + H(+). It catalyses the reaction 1,2-didecanoylglycerol + H2O = decanoylglycerol + decanoate + H(+). It carries out the reaction long chain 1,2-diacyl-3-O-beta-D-galactosyl-sn-glycerol + H2O = long chain acyl-3-O-beta-D-galactosyl-sn-glycerol + a fatty acid + H(+). The enzyme catalyses 1,2-dioctanoyl-3-O-beta-D-galactosyl-sn-glycerol + H2O = octanoyl-3-(beta-D-galactosyl)-sn-glycerol + octanoate + H(+). The catalysed reaction is 1,2-didodecanoyl-3-beta-D-galactosyl-sn-glycerol + H2O = dodecanoyl-3-beta-D-galactosyl-sn-glycerol + dodecanoate + H(+). It catalyses the reaction 1-beta-D-galactosyl-2,3-didodecanoyl-sn-glycerol + H2O = 1-beta-D-galactosyl-dodecanoyl-sn-glycerol + dodecanoate + H(+). It carries out the reaction a 1,2-diacyl-3-O-[alpha-D-galactosyl-(1-&gt;6)-beta-D-galactosyl]-sn-glycerol + H2O = acyl-3-O-[alpha-D-galactosyl-(1-&gt;6)-beta-D-galactosyl]-sn-glycerol + a fatty acid + H(+). The enzyme catalyses long chain 1,2-diacyl-3-O-[alpha-D-galactosyl-(1-&gt;6)-beta-D-galactosyl]-sn-glycerol + H2O = long chain acyl-3-O-[alpha-D-galactosyl-(1-&gt;6)-beta-D-galactosyl]-sn-glycerol + a fatty acid + H(+). The catalysed reaction is 1,2-dioctanoyl-3-O-[alpha-D-galactosyl-(1-&gt;6)-beta-D-galactosyl]-sn-glycerol + H2O = octanoyl-3-O-[alpha-D-galactosyl-(1-&gt;6)-beta-D-galactosyl]-sn-glycerol + octanoate + H(+). It catalyses the reaction 1,2-didodecanoyl-3-O-[alpha-D-galactosyl-(1-&gt;6)-beta-D-galactosyl]-sn-glycerol + H2O = dodecanoyl-3-O-[alpha-D-galactosyl-(1-&gt;6)-beta-D-galactosyl]-sn-glycerol + dodecanoate + H(+). It carries out the reaction a 1,2-diacyl-sn-glycero-3-phosphocholine + H2O = a monoacyl-sn-glycero-3-phosphocholine + a fatty acid + H(+). It functions in the pathway glycerolipid metabolism; triacylglycerol degradation. Its pathway is glycolipid metabolism. Regulated by CLPS and bile salts levels ranging 1-5 mM in neonates and 2-30 mM in healthy adults. CLPS stimulates milk fat digestion in the presence of 4 mM bile salts. Triacylglycerol lipase activity toward short- and medium-chain triglycerides is inhibited by increasing concentrations of bile salts and weakly reactivated by CLPS. Optimal triacylglycerol lipase activity is reached at bile salts concentrations ranging from 0.1 to 0.5 mM and then decreases at concentrations higher than 1 mM. Lipase activity toward long-chain glycerolipids is stimulated by CLPS in the presence of 4 mM bile salts. Galactolipase activity is inhibited at high concentrations of bile salts. Triacylglycerol lipase activity is inhibited by anti-obesity drug tetrahydrolipstatin. In terms of biological role, lipase that primarily hydrolyzes triglycerides and galactosylglycerides. In neonates, may play a major role in pancreatic digestion of dietary fats such as milk fat globules enriched in long-chain triglycerides. Hydrolyzes short-, medium- and long-chain fatty acyls in triglycerides without apparent positional specificity. Can completely deacylate triacylglycerols. When the liver matures and bile salt synthesis increases, likely functions mainly as a galactolipase and monoacylglycerol lipase. Hydrolyzes monogalactosyldiglycerols (MGDG) and digalactosyldiacylglycerols (DGDG) present in a plant-based diet, releasing long-chain polyunsaturated fatty acids. Hydrolyzes medium- and long-chain fatty acyls in galactolipids. May act together with LIPF to hydrolyze partially digested triglycerides. Hydrolyzes long-chain monoglycerides with high efficiency. In cytotoxic T cells, contributes to perforin-dependent cell lysis, but is unlikely to mediate direct cytotoxicity. Also has low phospholipase activity. In neurons, required for the localization of the phospholipid 1-oleoyl-2-palmitoyl-PC (OPPC) to neurite tips through acyl chain remodeling of membrane phospholipids. The resulting OPPC-rich lipid membrane domain recruits the t-SNARE protein STX4 by selectively interacting with the STX4 transmembrane domain and this promotes surface expression of the dopamine transporter SLC6A3/DAT at neurite tips by facilitating fusion of SLC6A3-containing transport vesicles with the plasma membrane. The sequence is that of Pancreatic lipase-related protein 2 from Homo sapiens (Human).